Here is a 729-residue protein sequence, read N- to C-terminus: Translation initiation factor IF-2 (729 aa).

The interval 20–141 (QFAGGGRGPG…TTTVRAPVRP (122 aa)) is disordered. The segment covering 22–91 (AGGGRGPGNP…PGGGRGGGRG (70 aa)) has biased composition (gly residues). Residues 92–108 (GDGRRRDESFVENEGGR) are compositionally biased toward basic and acidic residues. Positions 112-127 (SGRTTSTATTARTPGG) are enriched in low complexity. The region spanning 229-396 (PRPPVVTIMG…IILLVADLNE (168 aa)) is the tr-type G domain. Residues 238 to 245 (GHVDHGKT) form a G1 region. 238-245 (GHVDHGKT) contributes to the GTP binding site. The interval 263 to 267 (GITQH) is G2. Residues 284–287 (DTPG) are G3. Residues 284-288 (DTPGH) and 338-341 (NKID) each bind GTP. Residues 338–341 (NKID) are G4. The G5 stretch occupies residues 374 to 376 (SAK).

This sequence belongs to the TRAFAC class translation factor GTPase superfamily. Classic translation factor GTPase family. IF-2 subfamily.

It localises to the cytoplasm. Its function is as follows. One of the essential components for the initiation of protein synthesis. Protects formylmethionyl-tRNA from spontaneous hydrolysis and promotes its binding to the 30S ribosomal subunits. Also involved in the hydrolysis of GTP during the formation of the 70S ribosomal complex. This Roseiflexus sp. (strain RS-1) protein is Translation initiation factor IF-2.